The following is a 255-amino-acid chain: Flap endonuclease Xni (255 aa).

Mg(2+) is bound at residue D105. One can recognise a 5'-3' exonuclease domain in the interval 162–253 (EHSQFIDYLA…NLSQFRLPNP (92 aa)). K(+) contacts are provided by L172, A173, P181, V183, and I186. Positions 185–190 (GIGPKS) are interaction with DNA.

This sequence belongs to the Xni family. Requires Mg(2+) as cofactor. The cofactor is K(+).

In terms of biological role, has flap endonuclease activity. During DNA replication, flap endonucleases cleave the 5'-overhanging flap structure that is generated by displacement synthesis when DNA polymerase encounters the 5'-end of a downstream Okazaki fragment. The protein is Flap endonuclease Xni of Shewanella sediminis (strain HAW-EB3).